The sequence spans 205 residues: N-(5'-phosphoribosyl)anthranilate isomerase (205 aa).

The protein belongs to the TrpF family.

It carries out the reaction N-(5-phospho-beta-D-ribosyl)anthranilate = 1-(2-carboxyphenylamino)-1-deoxy-D-ribulose 5-phosphate. Its pathway is amino-acid biosynthesis; L-tryptophan biosynthesis; L-tryptophan from chorismate: step 3/5. In Zygosaccharomyces bailii, this protein is N-(5'-phosphoribosyl)anthranilate isomerase (TRP1).